A 940-amino-acid chain; its full sequence is MSDYKPTLNLPDTDFPMRGDLAKREPAMLKRWQDMDLYQKVRDVTKGRKSFILHDGPPYANGSIHIGHAVNKILKDIIVKSKTVSGFDAPYIPGWDCHGLPIEHKVEQLIGKAGTKVSYKEFRAKCREYAYTQIEEQKKDFIRLGVMGDWENPYLTMNFQTEANIVRALGKIAENGHLVKGFKPVYWSVVGGSALAEAEVEYQDKTSLSLDVRYAPQDEAALLAKFSAVEGEGKVSVVIWTTTPWTLPASQAVSIHPEFNYALVEVDMGLGKERLILAEDMVASVMSRYGVTDFRIVGRTVGAELAGTVLNHPFLQRDIPVILGEHVTTEAGTGCVHTAPDHGVDDFNVGRENGIGTINLVQDNGVYSDAAGEFAGLHVYKVDDAVLEALNRNNALVFESKIFHSYPHCWRTKTPLIFRATPQWFISMTKEGLLDSAKHAVEGVKWVPSWGQNRMEGMLNNSPDWCVSRQRTWGVPIALFINKETQELHPETPRLIEEVAKRIEVEGIDAWFEMEAEELLGADAEKYSKVTDTLDVWFDSGVTHYSVIDQRDELSFPADLYLEGSDQHRGWFQSSLKTSIAIRGVPPYKQVLTHGFTVDGDGRKMSKSLGNVLSPQKVMDTLGADIIRLWVAATDYTTEMTVSDEILKRVADSYRRIRNTARFMMANLNGFNPATDMVPAKDMIALDRWIVDRAALLQKELNTAYNEYQFHTVNQKIQNFCSVDLGGFYLDVIKDRQYTTQKDSLARRSAQTALYHVIEAFSRWIAPILSFTADEIWQTLPGERGESVFLETWYEGLEELTGDEAMGREFWKQVLEAKVATNKVLEAARSEGKMKASLSADITLYCDDALQTTLNRLGEELRFVLIASDVKVLPLSQAGEDAVATDLDGLKVHVELSKYTKCVRCWHHREEVGKRDAHPELCDRCISNLPDGEGEQRLYA.

A 'HIGH' region motif is present at residues 58–68; sequence PYANGSIHIGH. Glutamate 563 provides a ligand contact to L-isoleucyl-5'-AMP. Residues 604–608 carry the 'KMSKS' region motif; sequence KMSKS. Lysine 607 lines the ATP pocket. Residues cysteine 902, cysteine 905, cysteine 922, and cysteine 925 each coordinate Zn(2+).

This sequence belongs to the class-I aminoacyl-tRNA synthetase family. IleS type 1 subfamily. Monomer. Zn(2+) is required as a cofactor.

Its subcellular location is the cytoplasm. The catalysed reaction is tRNA(Ile) + L-isoleucine + ATP = L-isoleucyl-tRNA(Ile) + AMP + diphosphate. Catalyzes the attachment of isoleucine to tRNA(Ile). As IleRS can inadvertently accommodate and process structurally similar amino acids such as valine, to avoid such errors it has two additional distinct tRNA(Ile)-dependent editing activities. One activity is designated as 'pretransfer' editing and involves the hydrolysis of activated Val-AMP. The other activity is designated 'posttransfer' editing and involves deacylation of mischarged Val-tRNA(Ile). The protein is Isoleucine--tRNA ligase of Marinomonas sp. (strain MWYL1).